A 145-amino-acid chain; its full sequence is Probable thioredoxin-2 (145 aa).

Residues 39-144 enclose the Thioredoxin domain; the sequence is VFDIDSVEDF…LDDFIEDVLA (106 aa). Residues cysteine 68 and cysteine 71 each act as nucleophile in the active site. Cysteine 68 and cysteine 71 are oxidised to a cystine.

Belongs to the thioredoxin family.

Its function is as follows. Participates in various redox reactions through the reversible oxidation of its active center dithiol to a disulfide and catalyzes dithiol-disulfide exchange reactions. This Caenorhabditis elegans protein is Probable thioredoxin-2 (trx-2).